The following is a 133-amino-acid chain: Aspartate 1-decarboxylase (133 aa).

S26 acts as the Schiff-base intermediate with substrate; via pyruvic acid in catalysis. S26 is subject to Pyruvic acid (Ser). T58 contributes to the substrate binding site. Catalysis depends on Y59, which acts as the Proton donor. Substrate is bound at residue 74-76; that stretch reads GAA.

Belongs to the PanD family. Heterooctamer of four alpha and four beta subunits. It depends on pyruvate as a cofactor. Post-translationally, is synthesized initially as an inactive proenzyme, which is activated by self-cleavage at a specific serine bond to produce a beta-subunit with a hydroxyl group at its C-terminus and an alpha-subunit with a pyruvoyl group at its N-terminus.

It is found in the cytoplasm. It catalyses the reaction L-aspartate + H(+) = beta-alanine + CO2. Its pathway is cofactor biosynthesis; (R)-pantothenate biosynthesis; beta-alanine from L-aspartate: step 1/1. In terms of biological role, catalyzes the pyruvoyl-dependent decarboxylation of aspartate to produce beta-alanine. The protein is Aspartate 1-decarboxylase of Legionella pneumophila (strain Paris).